A 323-amino-acid polypeptide reads, in one-letter code: Thiamine-monophosphate kinase (323 aa).

Residues Asp30, Ser45, Thr46, and Asp47 each coordinate Mg(2+). His54 contributes to the substrate binding site. Positions 75 and 122 each coordinate Mg(2+). Residues 121–122 (GD) and Arg146 each bind ATP. Asp212 is a binding site for Mg(2+). Ser214 contributes to the ATP binding site. Asp215 contributes to the Mg(2+) binding site. Glu263 and Phe319 together coordinate substrate.

This sequence belongs to the thiamine-monophosphate kinase family.

It catalyses the reaction thiamine phosphate + ATP = thiamine diphosphate + ADP. It functions in the pathway cofactor biosynthesis; thiamine diphosphate biosynthesis; thiamine diphosphate from thiamine phosphate: step 1/1. Catalyzes the ATP-dependent phosphorylation of thiamine-monophosphate (TMP) to form thiamine-pyrophosphate (TPP), the active form of vitamin B1. In Buchnera aphidicola subsp. Schizaphis graminum (strain Sg), this protein is Thiamine-monophosphate kinase.